Here is a 501-residue protein sequence, read N- to C-terminus: Uridine kinase (501 aa).

Residue S17 is modified to Phosphoserine. Position 63–70 (63–70) interacts with ATP; that stretch reads GASGSGKT. Residue S276 is modified to Phosphoserine.

The protein belongs to the uridine kinase family.

It is found in the cytoplasm. The protein resides in the nucleus. The catalysed reaction is uridine + ATP = UMP + ADP + H(+). The enzyme catalyses cytidine + ATP = CMP + ADP + H(+). It functions in the pathway pyrimidine metabolism; CTP biosynthesis via salvage pathway; CTP from cytidine: step 1/3. Its pathway is pyrimidine metabolism; UMP biosynthesis via salvage pathway; UMP from uridine: step 1/1. Functionally, catalyzes the conversion of uridine into UMP and cytidine into CMP in the pyrimidine salvage pathway. The polypeptide is Uridine kinase (URK1) (Saccharomyces cerevisiae (strain ATCC 204508 / S288c) (Baker's yeast)).